A 228-amino-acid polypeptide reads, in one-letter code: Uracil-DNA glycosylase (228 aa).

The active-site Proton acceptor is aspartate 64.

It belongs to the uracil-DNA glycosylase (UDG) superfamily. UNG family.

It is found in the cytoplasm. The catalysed reaction is Hydrolyzes single-stranded DNA or mismatched double-stranded DNA and polynucleotides, releasing free uracil.. Excises uracil residues from the DNA which can arise as a result of misincorporation of dUMP residues by DNA polymerase or due to deamination of cytosine. The protein is Uracil-DNA glycosylase of Yersinia pseudotuberculosis serotype IB (strain PB1/+).